Here is a 276-residue protein sequence, read N- to C-terminus: 1H-3-hydroxy-4-oxoquinaldine 2,4-dioxygenase (276 aa).

In terms of domain architecture, AB hydrolase-1 spans 28 to 150 (PAILLLPGWC…TLLKDPERWR (123 aa)). Substrate is bound by residues 36 to 38 (WCH), 100 to 101 (HS), and Trp-160. The Proton donor/acceptor role is filled by His-251.

It belongs to the AB hydrolase superfamily. None. Contrary to most other dioxygenases, this enzyme does not require a cofactor for catalysis. is required as a cofactor.

The catalysed reaction is 3-hydroxy-2-methyl-1H-quinolin-4-one + O2 = N-acetylanthranilate + CO + H(+). In terms of biological role, ring-cleaving dioxygenase involved in quinaldine degradation and utilization. The protein is 1H-3-hydroxy-4-oxoquinaldine 2,4-dioxygenase (hod) of Paenarthrobacter nitroguajacolicus (Arthrobacter nitroguajacolicus).